Reading from the N-terminus, the 213-residue chain is Probable GTP-binding protein EngB (213 aa).

Residues 30–204 form the EngB-type G domain; it reads EGFEVAFAGR…YTALAGWMEL (175 aa). GTP is bound by residues 38-45, 64-68, 82-85, 149-152, and 182-185; these read GRSNAGKS, GRTQL, DLPG, TKAD, and LFSA. Mg(2+) is bound by residues serine 45 and threonine 66.

The protein belongs to the TRAFAC class TrmE-Era-EngA-EngB-Septin-like GTPase superfamily. EngB GTPase family. Mg(2+) is required as a cofactor.

Functionally, necessary for normal cell division and for the maintenance of normal septation. In Pseudomonas fluorescens (strain SBW25), this protein is Probable GTP-binding protein EngB.